Consider the following 631-residue polypeptide: Extracellular metalloproteinase mep (631 aa).

The first 19 residues, 1–19, serve as a signal peptide directing secretion; that stretch reads MHGLRLVCSIGTLPLVILA. A propeptide spanning residues 20-241 is cleaved from the precursor; the sequence is YPAASLHTTS…VHGVVDYVAD (222 aa). N-linked (GlcNAc...) asparagine glycans are attached at residues Asn-282, Asn-332, and Asn-364. Position 425 (His-425) interacts with Zn(2+). Residue Glu-426 is part of the active site. Position 429 (His-429) interacts with Zn(2+). N-linked (GlcNAc...) asparagine glycans are attached at residues Asn-470 and Asn-505.

The protein belongs to the peptidase M36 family. Zn(2+) is required as a cofactor.

The protein resides in the secreted. Its function is as follows. Secreted metalloproteinase that allows assimilation of proteinaceous substrates. This chain is Extracellular metalloproteinase mep (mep), found in Aspergillus niger (strain ATCC MYA-4892 / CBS 513.88 / FGSC A1513).